We begin with the raw amino-acid sequence, 478 residues long: Proline--tRNA ligase (478 aa).

It belongs to the class-II aminoacyl-tRNA synthetase family. ProS type 3 subfamily. As to quaternary structure, homodimer.

The protein resides in the cytoplasm. The enzyme catalyses tRNA(Pro) + L-proline + ATP = L-prolyl-tRNA(Pro) + AMP + diphosphate. Catalyzes the attachment of proline to tRNA(Pro) in a two-step reaction: proline is first activated by ATP to form Pro-AMP and then transferred to the acceptor end of tRNA(Pro). The chain is Proline--tRNA ligase from Clostridium botulinum (strain Langeland / NCTC 10281 / Type F).